The chain runs to 455 residues: Argininosuccinate synthase (455 aa).

Residues 17–25 (AFSGGLDTS) and A43 contribute to the ATP site. Y99 is an L-citrulline binding site. ATP contacts are provided by G129 and T131. The L-aspartate site is built by T131, N135, and D136. N135 lines the L-citrulline pocket. D136 contributes to the ATP binding site. The L-citrulline site is built by R139 and S192. An ATP-binding site is contributed by D194. T201, E203, and E280 together coordinate L-citrulline. Positions 434–448 (TGLPQVDNNNLSSGR) are enriched in polar residues. The interval 434–455 (TGLPQVDNNNLSSGRGLQDKRQ) is disordered.

This sequence belongs to the argininosuccinate synthase family. Type 2 subfamily. In terms of assembly, homotetramer.

The protein resides in the cytoplasm. The enzyme catalyses L-citrulline + L-aspartate + ATP = 2-(N(omega)-L-arginino)succinate + AMP + diphosphate + H(+). The protein operates within amino-acid biosynthesis; L-arginine biosynthesis; L-arginine from L-ornithine and carbamoyl phosphate: step 2/3. The protein is Argininosuccinate synthase (argG) of Yersinia pestis.